The following is a 121-amino-acid chain: Nitrogenase-stabilizing/protective protein NifW (121 aa).

This sequence belongs to the NifW family. As to quaternary structure, homotrimer; associates with NifD.

Its function is as follows. May protect the nitrogenase Fe-Mo protein from oxidative damage. This Synechococcus sp. (strain JA-2-3B'a(2-13)) (Cyanobacteria bacterium Yellowstone B-Prime) protein is Nitrogenase-stabilizing/protective protein NifW.